We begin with the raw amino-acid sequence, 212 residues long: Ribosomal RNA small subunit methyltransferase G (212 aa).

S-adenosyl-L-methionine-binding positions include Gly80, Leu85, 131–132 (VE), and Arg146.

The protein belongs to the methyltransferase superfamily. RNA methyltransferase RsmG family.

Its subcellular location is the cytoplasm. The catalysed reaction is guanosine(527) in 16S rRNA + S-adenosyl-L-methionine = N(7)-methylguanosine(527) in 16S rRNA + S-adenosyl-L-homocysteine. Its function is as follows. Specifically methylates the N7 position of guanine in position 527 of 16S rRNA. This Azoarcus sp. (strain BH72) protein is Ribosomal RNA small subunit methyltransferase G.